We begin with the raw amino-acid sequence, 302 residues long: HPr kinase/phosphorylase (302 aa).

Active-site residues include H136 and K157. 151–158 serves as a coordination point for ATP; sequence GESGIGKS. A Mg(2+)-binding site is contributed by S158. The active-site Proton acceptor; for phosphorylation activity. Proton donor; for dephosphorylation activity is the D175. The interval 198–207 is important for the catalytic mechanism of both phosphorylation and dephosphorylation; it reads LEVRGLGIID. Residue E199 participates in Mg(2+) binding. Residue R240 is part of the active site. The interval 261-266 is important for the catalytic mechanism of dephosphorylation; it reads PIRPGR.

It belongs to the HPrK/P family. In terms of assembly, homohexamer. It depends on Mg(2+) as a cofactor.

The catalysed reaction is [HPr protein]-L-serine + ATP = [HPr protein]-O-phospho-L-serine + ADP + H(+). It carries out the reaction [HPr protein]-O-phospho-L-serine + phosphate + H(+) = [HPr protein]-L-serine + diphosphate. Catalyzes the ATP- as well as the pyrophosphate-dependent phosphorylation of a specific serine residue in HPr, a phosphocarrier protein of the phosphoenolpyruvate-dependent sugar phosphotransferase system (PTS). HprK/P also catalyzes the pyrophosphate-producing, inorganic phosphate-dependent dephosphorylation (phosphorolysis) of seryl-phosphorylated HPr (P-Ser-HPr). The two antagonistic activities of HprK/P are regulated by several intracellular metabolites, which change their concentration in response to the absence or presence of rapidly metabolisable carbon sources (glucose, fructose, etc.) in the growth medium. Therefore, by controlling the phosphorylation state of HPr, HPrK/P is a sensor enzyme that plays a major role in the regulation of carbon metabolism and sugar transport: it mediates carbon catabolite repression (CCR), and regulates PTS-catalyzed carbohydrate uptake and inducer exclusion. The protein is HPr kinase/phosphorylase of Clostridium beijerinckii (strain ATCC 51743 / NCIMB 8052) (Clostridium acetobutylicum).